Here is an 84-residue protein sequence, read N- to C-terminus: RNA-binding protein Hfq (84 aa).

Positions 11 to 71 (DTFLNHVRKN…ISTIMPGHPV (61 aa)) constitute a Sm domain.

This sequence belongs to the Hfq family. In terms of assembly, homohexamer.

Its function is as follows. RNA chaperone that binds small regulatory RNA (sRNAs) and mRNAs to facilitate mRNA translational regulation in response to envelope stress, environmental stress and changes in metabolite concentrations. Also binds with high specificity to tRNAs. The polypeptide is RNA-binding protein Hfq (Methylobacterium nodulans (strain LMG 21967 / CNCM I-2342 / ORS 2060)).